A 253-amino-acid chain; its full sequence is uncharacterized protein (253 aa).

An N-terminal signal peptide occupies residues 1-16 (MCVVYRTSVLILLASG). Residue cysteine 17 is the site of N-palmitoyl cysteine attachment. Cysteine 17 carries S-diacylglycerol cysteine lipidation.

Belongs to the staphylococcal tandem lipoprotein family.

The protein resides in the cell membrane. This is an uncharacterized protein from Staphylococcus aureus (strain N315).